The chain runs to 511 residues: ADP,ATP carrier protein 4 (511 aa).

The next 12 helical transmembrane spans lie at 34 to 54 (VSKFLFITLLMFCILFIQNLI), 70 to 90 (IISFLKFWGVMPSAFLMTAIY), 102 to 122 (IFYLIISIFLTFFALFAYVIF), 157 to 177 (FSLFYIIAELWPNVVFALLFW), 192 to 212 (FYPLFGLLSQTGIYLAGQFLE), 231 to 251 (FHTLSIQIILTIVLILGIIAI), 296 to 316 (LIATLLICYGIAINLVEGPWK), 330 to 350 (AAFIGSYLSYTGVFTILFVVL), 361 to 381 (FTAAVITPLIVFITGILFFAV), 390 to 410 (LIIANFILTDPALIAITIGAI), 453 to 473 (LGKSGSAFLQSLVFIILPSAS), and 476 to 496 (SISTCLMIIFIITCLTWLWAT).

Belongs to the ADP/ATP translocase tlc family.

The protein resides in the cell membrane. Provides the rickettsial cell with host ATP in exchange for rickettsial ADP. This is an obligate exchange system. This energy acquiring activity is an important component of rickettsial parasitism. The polypeptide is ADP,ATP carrier protein 4 (tlcD) (Rickettsia conorii (strain ATCC VR-613 / Malish 7)).